The following is a 90-amino-acid chain: Evasin P458 (90 aa).

The signal sequence occupies residues 1 to 24 (MEVKTFAFLQIAVLIAFSLHSASA). Disulfide bonds link Cys-44–Cys-63, Cys-48–Cys-65, and Cys-59–Cys-76. Asn-47 is a glycosylation site (N-linked (GlcNAc...) asparagine).

It is found in the secreted. In terms of biological role, salivary chemokine-binding protein which binds to host chemokines CXCL1, CXCL2, CXCL3, CXCL5, CXCL6 and CXCL13. This is Evasin P458 from Ixodes ricinus (Common tick).